Here is a 140-residue protein sequence, read N- to C-terminus: Large ribosomal subunit protein uL11 (140 aa).

The protein belongs to the universal ribosomal protein uL11 family. Part of the ribosomal stalk of the 50S ribosomal subunit. Interacts with L10 and the large rRNA to form the base of the stalk. L10 forms an elongated spine to which L12 dimers bind in a sequential fashion forming a multimeric L10(L12)X complex. In terms of processing, one or more lysine residues are methylated.

Its function is as follows. Forms part of the ribosomal stalk which helps the ribosome interact with GTP-bound translation factors. The polypeptide is Large ribosomal subunit protein uL11 (Dehalococcoides mccartyi (strain ATCC BAA-2266 / KCTC 15142 / 195) (Dehalococcoides ethenogenes (strain 195))).